The following is an 82-amino-acid chain: ATP synthase subunit c, chloroplastic (82 aa).

The next 2 membrane-spanning stretches (helical) occupy residues A7–G27 and L57–A77.

It belongs to the ATPase C chain family. As to quaternary structure, F-type ATPases have 2 components, F(1) - the catalytic core - and F(0) - the membrane proton channel. F(1) has five subunits: alpha(3), beta(3), gamma(1), delta(1), epsilon(1). F(0) has four main subunits: a(1), b(1), b'(1) and c(10-14). The alpha and beta chains form an alternating ring which encloses part of the gamma chain. F(1) is attached to F(0) by a central stalk formed by the gamma and epsilon chains, while a peripheral stalk is formed by the delta, b and b' chains.

It localises to the plastid. Its subcellular location is the chloroplast thylakoid membrane. Its function is as follows. F(1)F(0) ATP synthase produces ATP from ADP in the presence of a proton or sodium gradient. F-type ATPases consist of two structural domains, F(1) containing the extramembraneous catalytic core and F(0) containing the membrane proton channel, linked together by a central stalk and a peripheral stalk. During catalysis, ATP synthesis in the catalytic domain of F(1) is coupled via a rotary mechanism of the central stalk subunits to proton translocation. Key component of the F(0) channel; it plays a direct role in translocation across the membrane. A homomeric c-ring of between 10-14 subunits forms the central stalk rotor element with the F(1) delta and epsilon subunits. In Guillardia theta (Cryptophyte), this protein is ATP synthase subunit c, chloroplastic.